We begin with the raw amino-acid sequence, 161 residues long: Protein E6 (161 aa).

Zinc fingers lie at residues 45–81 (CNFCGNFLTYLEICEFDEKRLSLIWKEYLVYACCRCC) and 118–154 (CQTCMKYLDAIEKLDICGRRRPFHLVRGSWKGICRLC).

It belongs to the papillomaviridae E6 protein family. Forms homodimers. Interacts with ubiquitin-protein ligase UBE3A/E6-AP; this interaction stimulates UBE3A ubiquitin activity. Interacts with host BAK1.

The protein localises to the host cytoplasm. It localises to the host nucleus. Its function is as follows. Plays a major role in the induction and maintenance of cellular transformation. E6 associates with host UBE3A/E6-AP ubiquitin-protein ligase and modulates its activity. Protects host keratinocytes from apoptosis by mediating the degradation of host BAK1. May also inhibit host immune response. The chain is Protein E6 from Homo sapiens (Human).